A 351-amino-acid polypeptide reads, in one-letter code: MTTPAATTDLSALPTLSSELNELNEAQLIEFTSAAEALILQVSDVRLLQDLRVQLTGKKSPLTGWSKQMGKLSNDDKKTYGGWLHEVRSRIQDALTAQQQQLEVVALNAKLASESIDITLPARGGQKGHLHPVTMITQRMQQYFIQAGFNVATGPEVESDYYNFEALNIPSHHPARAMHDTFYFDAHYLLRTHTSPVQIRTMEKNEPPIRIICPGRVYRNDSDQTHSPMFHQLEGLMVTESSTFAELKGLISEFLEAFFAKELTVRFRPSFFPFTEPSAEVDILDDNGKWLEVMGCGMVHPQVLTNCGIDAEKYTGFAFGMGIERFAMLYYGIDDLRLFFQNDVRFLKQFG.

Mg(2+) is bound at residue Glu-276.

This sequence belongs to the class-II aminoacyl-tRNA synthetase family. Phe-tRNA synthetase alpha subunit type 1 subfamily. In terms of assembly, tetramer of two alpha and two beta subunits. Mg(2+) serves as cofactor.

The protein localises to the cytoplasm. The catalysed reaction is tRNA(Phe) + L-phenylalanine + ATP = L-phenylalanyl-tRNA(Phe) + AMP + diphosphate + H(+). This Psychrobacter arcticus (strain DSM 17307 / VKM B-2377 / 273-4) protein is Phenylalanine--tRNA ligase alpha subunit.